Reading from the N-terminus, the 402-residue chain is Nicotinate phosphoribosyltransferase (402 aa).

H226 is modified (phosphohistidine; by autocatalysis).

This sequence belongs to the NAPRTase family. Transiently phosphorylated on a His residue during the reaction cycle. Phosphorylation strongly increases the affinity for substrates and increases the rate of nicotinate D-ribonucleotide production. Dephosphorylation regenerates the low-affinity form of the enzyme, leading to product release.

The catalysed reaction is nicotinate + 5-phospho-alpha-D-ribose 1-diphosphate + ATP + H2O = nicotinate beta-D-ribonucleotide + ADP + phosphate + diphosphate. It participates in cofactor biosynthesis; NAD(+) biosynthesis; nicotinate D-ribonucleotide from nicotinate: step 1/1. In terms of biological role, catalyzes the synthesis of beta-nicotinate D-ribonucleotide from nicotinate and 5-phospho-D-ribose 1-phosphate at the expense of ATP. In Chromobacterium violaceum (strain ATCC 12472 / DSM 30191 / JCM 1249 / CCUG 213 / NBRC 12614 / NCIMB 9131 / NCTC 9757 / MK), this protein is Nicotinate phosphoribosyltransferase.